The chain runs to 392 residues: DNA replication and repair protein RecF (392 aa).

Glycine 30–threonine 37 contributes to the ATP binding site.

The protein belongs to the RecF family.

Its subcellular location is the cytoplasm. In terms of biological role, the RecF protein is involved in DNA metabolism; it is required for DNA replication and normal SOS inducibility. RecF binds preferentially to single-stranded, linear DNA. It also seems to bind ATP. The polypeptide is DNA replication and repair protein RecF (Chloroflexus aurantiacus (strain ATCC 29364 / DSM 637 / Y-400-fl)).